Here is a 69-residue protein sequence, read N- to C-terminus: Amphipathic peptide Hp1404 (69 aa).

Residues 1 to 23 form the signal peptide; it reads MKTQFAILMITVVLMQMLVQTEG. Phenylalanine 37 is subject to Phenylalanine amide. Residues 41–69 constitute a propeptide that is removed on maturation; it reads GLKNLDQLDDSFDSDLSDADVKLLREMFK.

This sequence belongs to the non-disulfide-bridged peptide (NDBP) superfamily. Short antimicrobial peptide (group 4) family. Expressed by the venom gland.

The protein resides in the secreted. Its subcellular location is the target cell membrane. Antibacterial activity is decreased by serum. Its function is as follows. Antimicrobial peptide that acts by inducing concentration-dependent membrane disruption, implying a membrane-lytic mode of action. Acts with potent activity against Gram-positive bacteria (MIC=4.04-16.16 uM) including methicillin-resistant S.aureus (MRSA). Its activity on Gram-negative bacteria is controversial. Li and colleagues (2014) describe no activity towards E.coli and P.aeruginosa, while Kim and colleagues (2018) describe a potent activity towards P.aeruginosa (MIC=3.13-12.5 uM), and Luo and colleagues (2021) describe a potent activity against antibiotic-sensitive and -resistant Acinetobacter baumannii strains (MIC=3.2-10 uM). On S.aureus, possibly acts by impairing an unknown intracellular target and/or by interacting with the membrane, leading to the lateral expansion of the membrane area at high MIC concentrations, resulting in the formation of mesosome-like structures that leads to cell lysis. Shows moderate inhibition of P.aeruginosa biofilm formation. Administration of this peptide at sub-MIC concentrations in multiple treatments does not lead to resistance in S.aureus. Exhibits low toxicity and hemolytic activity against mammalian cell lines and BALB/c mice. In vivo, improves the survival rate of the MRSA infected BALB/c mice in the peritonitis model. In Heterometrus petersii (Asian forest scorpion), this protein is Amphipathic peptide Hp1404.